The chain runs to 352 residues: PDZ and LIM domain protein 2 (352 aa).

Residues 1 to 84 (MALTVDVAGP…PLRLQLDRSQ (84 aa)) enclose the PDZ domain. Disordered stretches follow at residues 67-97 (SKIR…DSSL) and 111-149 (YTES…TGEA). A compositionally biased stretch (polar residues) spans 81 to 95 (DRSQATSPGQTNGDS). The segment covering 111–135 (YTESQSSLRSSYSSPTSLSPRAGSP) has biased composition (low complexity). Position 124 is a phosphoserine (Ser124). A Phosphothreonine modification is found at Thr126. Phosphoserine is present on residues Ser127, Ser129, Ser134, Ser137, Ser143, Ser161, Ser197, Ser203, Ser213, and Ser266. The segment at 170–213 (LSYSGRPGSRQAGLGRAGDSAVLVLPPSPGPRSSRPSMDSEGGS) is disordered. In terms of domain architecture, LIM zinc-binding spans 284–344 (HTCEKCSTSI…EKHARQRYSA (61 aa)).

As to quaternary structure, interacts with alpha-actinins ACTN1 and ACTN4, FLNA and MYH9. Interacts (via LIM zinc-binding domain) with MKRN2.

It localises to the cytoplasm. It is found in the nucleus. The protein resides in the cytoskeleton. Its function is as follows. Probable adapter protein located at the actin cytoskeleton that promotes cell attachment. Necessary for the migratory capacity of epithelial cells. Overexpression enhances cell adhesion to collagen and fibronectin and suppresses anchorage independent growth. May contribute to tumor cell migratory capacity. In Homo sapiens (Human), this protein is PDZ and LIM domain protein 2 (PDLIM2).